Here is a 445-residue protein sequence, read N- to C-terminus: Histone acetyltransferase of the MYST family 1 (445 aa).

Residues 60–118 (LEVGTRVMCQWRDGKYHPVKVIERRKNYNGGHNDYEYYVHYTEFNRRLDEWIKLEQLDL) enclose the Tudor-knot domain. The region spanning 169–440 (TKVKNIATIE…VDVSKMIWTP (272 aa)) is the MYST-type HAT domain. A C2HC MYST-type zinc finger spans residues 202 to 227 (LFFCEFCLSFMKRKEQLQRHMRKCDL). Position 269 is an N6-acetyllysine; by autocatalysis (lysine 269). Acetyl-CoA is bound by residues 312 to 314 (ILT) and 319 to 325 (QRKGYGK). Residue glutamate 345 is the Proton donor/acceptor of the active site. Serine 349 provides a ligand contact to acetyl-CoA.

It belongs to the MYST (SAS/MOZ) family. As to quaternary structure, interacts with MRG1 and MRG2. Component of the NuA4 histone acetyltransferase complex. Post-translationally, autoacetylation at Lys-269 is required for proper function. In terms of tissue distribution, expressed in cotyledons, leaves, stems, roots and, at higher levels in developing flowers, particularly in the anthers and gynoecia. Constitutively expressed in all tissues, predominantly in shoot apical meristem.

The protein localises to the nucleus. The enzyme catalyses L-lysyl-[protein] + acetyl-CoA = N(6)-acetyl-L-lysyl-[protein] + CoA + H(+). Its function is as follows. Histone acetyltransferase which may be involved in transcriptional activation. Acetylates 'Lys-5' of histone H4 (H4K5ac). Essential for gametophyte development. Involved in DNA repair after UV-B exposure. Negative regulator of flowering controlling the H4K5ac levels in the FLC chromatin. In Arabidopsis thaliana (Mouse-ear cress), this protein is Histone acetyltransferase of the MYST family 1.